We begin with the raw amino-acid sequence, 321 residues long: Thioredoxin reductase tcpT (321 aa).

FAD contacts are provided by residues 14 to 17 (GGPA), 36 to 41 (DSGRYR), His49, and Ala114. The cysteines at positions 138 and 141 are disulfide-linked. FAD is bound by residues Asp282 and 289 to 290 (NV).

It belongs to the class-II pyridine nucleotide-disulfide oxidoreductase family. As to quaternary structure, homodimer. The cofactor is FAD.

It participates in secondary metabolite biosynthesis. In terms of biological role, thioredoxin reductase; part of the gene cluster that mediates the biosynthesis of an unusual class of epipolythiodioxopiperazines (ETPs) lacking the reactive thiol group important for toxicity. Firstly, L-tyrosine is prenylated by tcpD, before undergoing condensation with L-glycine in a reaction catalyzed by the NRPS tcpP leading to the diketopiperazine (DKP) backbone. Afterwards the alpha-carbon of tyrosine is oxidized by the cytochrome P450 tcpC to form a hydroxyl group. However, in contrast other ETP biosynthesis pathways studied so far, tcpC is not able to bishydroxylate the DKP at both alpha-carbon positions, but hydroxylates the alpha-carbon of the tyrosine part and the nitrogen of the glycine part. The next steps involve an alpha,beta-elimination reaction catalyzed by tcpI, a methylation by the methyltransferase tcpN the action of the four enzyme cascade tcpG/K/J/I. Due to a dysfunctional cytochrome P450 monooxygenase tcpC, the pathway leads to the biosynthesis of probable non-toxic metabolites lacking the reactive thiol group. The protein is Thioredoxin reductase tcpT of Claviceps purpurea (strain 20.1) (Ergot fungus).